A 408-amino-acid chain; its full sequence is Dicamba O-demethylase 1, ferredoxin reductase component (408 aa).

FAD contacts are provided by Gly14, Lys49, Val82, Arg130, Asp279, and Val298.

The protein belongs to the FAD-dependent oxidoreductase family. Monomer. The dicamba O-demethylase multicomponent enzyme system is composed of an oxygenase component (DdmC) and an electron transfer component formed by a ferredoxin reductase (DdmA1) and a ferredoxin (DdmB). In vitro, dicamba O-demethylase assays in which DdmA2 is substituted for DdmA1 demonstrate that the two enzymes possess nearly identical activities. FAD serves as cofactor.

The enzyme catalyses 2 reduced [2Fe-2S]-[ferredoxin] + NAD(+) + H(+) = 2 oxidized [2Fe-2S]-[ferredoxin] + NADH. Component of the dicamba O-demethylase multicomponent enzyme system involved in the degradation of the herbicide dicamba. In vitro, catalyzes the transfers of electrons from ferredoxin (DdmB) to NADH. Both NADH and NADPH support enzyme activity, with NADH being markedly more effective than NADPH. The polypeptide is Dicamba O-demethylase 1, ferredoxin reductase component (Stenotrophomonas maltophilia (Pseudomonas maltophilia)).